We begin with the raw amino-acid sequence, 393 residues long: 4-hydroxyphenylpyruvate dioxygenase (393 aa).

Residue threonine 2 is modified to N-acetylthreonine. 2 VOC domains span residues 18–152 and 180–338; these read HFHS…KMTF and IIDH…IFTK. Histidine 183 lines the Fe cation pocket. Residues serine 211, serine 226, and serine 250 each carry the phosphoserine modification. Fe cation is bound by residues histidine 266 and glutamate 349.

The protein belongs to the 4HPPD family. As to quaternary structure, homodimer. It depends on Fe cation as a cofactor. Liver.

Its subcellular location is the cytoplasm. It is found in the endoplasmic reticulum membrane. The protein localises to the golgi apparatus membrane. The catalysed reaction is 3-(4-hydroxyphenyl)pyruvate + O2 = homogentisate + CO2. The protein operates within amino-acid degradation; L-phenylalanine degradation; acetoacetate and fumarate from L-phenylalanine: step 3/6. In terms of biological role, catalyzes the conversion of 4-hydroxyphenylpyruvic acid to homogentisic acid, one of the steps in tyrosine catabolism. The sequence is that of 4-hydroxyphenylpyruvate dioxygenase (HPD) from Sus scrofa (Pig).